The following is a 285-amino-acid chain: tRNA pseudouridine synthase B (285 aa).

Residue Asp-40 is the Nucleophile of the active site.

The protein belongs to the pseudouridine synthase TruB family. Type 1 subfamily.

The catalysed reaction is uridine(55) in tRNA = pseudouridine(55) in tRNA. In terms of biological role, responsible for synthesis of pseudouridine from uracil-55 in the psi GC loop of transfer RNAs. The chain is tRNA pseudouridine synthase B from Caldanaerobacter subterraneus subsp. tengcongensis (strain DSM 15242 / JCM 11007 / NBRC 100824 / MB4) (Thermoanaerobacter tengcongensis).